The primary structure comprises 404 residues: Formate-dependent phosphoribosylglycinamide formyltransferase (404 aa).

Residues 25-26 and Glu85 each bind N(1)-(5-phospho-beta-D-ribosyl)glycinamide; that span reads EL. Residues Arg118, Lys159, 164–169, 199–202, and Glu207 each bind ATP; these read SSGKGQ and EGFI. The ATP-grasp domain occupies 123–318; that stretch reads RLAAEELGLP…EFELHARAIL (196 aa). Positions 277 and 289 each coordinate Mg(2+). N(1)-(5-phospho-beta-D-ribosyl)glycinamide contacts are provided by residues Asp296, Lys365, and 372-373; that span reads RR. A disordered region spans residues 384 to 404; the sequence is TDEARSRAKQAAAAVRPVSAK. The segment covering 392-404 has biased composition (low complexity); that stretch reads KQAAAAVRPVSAK.

Belongs to the PurK/PurT family. Homodimer.

The catalysed reaction is N(1)-(5-phospho-beta-D-ribosyl)glycinamide + formate + ATP = N(2)-formyl-N(1)-(5-phospho-beta-D-ribosyl)glycinamide + ADP + phosphate + H(+). Its pathway is purine metabolism; IMP biosynthesis via de novo pathway; N(2)-formyl-N(1)-(5-phospho-D-ribosyl)glycinamide from N(1)-(5-phospho-D-ribosyl)glycinamide (formate route): step 1/1. In terms of biological role, involved in the de novo purine biosynthesis. Catalyzes the transfer of formate to 5-phospho-ribosyl-glycinamide (GAR), producing 5-phospho-ribosyl-N-formylglycinamide (FGAR). Formate is provided by PurU via hydrolysis of 10-formyl-tetrahydrofolate. This chain is Formate-dependent phosphoribosylglycinamide formyltransferase, found in Paraburkholderia xenovorans (strain LB400).